Consider the following 649-residue polypeptide: Protein translocase subunit SecA 2 (649 aa).

ATP is bound by residues Gln105, 123–127 (GEGKT), and Asp535.

It belongs to the SecA family. Monomer and homodimer. Part of the essential Sec protein translocation apparatus which comprises SecA, SecYEG and auxiliary proteins SecDF-YajC and YidC.

It localises to the cell inner membrane. The protein localises to the cytoplasm. The catalysed reaction is ATP + H2O + cellular proteinSide 1 = ADP + phosphate + cellular proteinSide 2.. Functionally, part of the Sec protein translocase complex. Interacts with the SecYEG preprotein conducting channel. Has a central role in coupling the hydrolysis of ATP to the transfer of proteins into and across the cell membrane, serving both as a receptor for the preprotein-SecB complex and as an ATP-driven molecular motor driving the stepwise translocation of polypeptide chains across the membrane. This Magnetococcus marinus (strain ATCC BAA-1437 / JCM 17883 / MC-1) protein is Protein translocase subunit SecA 2.